Consider the following 644-residue polypeptide: MTTSESPDAYTESFGAHTIVKPAGPPRVGQPSWNPQRASSMPVNRYRPFAEEVEPIRLRNRTWPDRVIDRAPLWCAVDLRDGNQALIDPMSPARKRRMFDLLVRMGYKEIEVGFPSASQTDFDFVREIIEQGAIPDDVTIQVLTQCRPELIERTFQACSGAPRAIVHFYNSTSILQRRVVFRANRAEVQAIATDGARKCVEQAAKYPGTQWRFEYSPESYTGTELEYAKQVCDAVGEVIAPTPERPIIFNLPATVEMTTPNVYADSIEWMSRNLANRESVILSLHPHNDRGTAVAAAELGFAAGADRIEGCLFGNGERTGNVCLVTLGLNLFSRGVDPQIDFSNIDEIRRTVEYCNQLPVHERHPYGGDLVYTAFSGSHQDAINKGLDAMKLDADAADCDVDDMLWQVPYLPIDPRDVGRTYEAVIRVNSQSGKGGVAYIMKTDHGLSLPRRLQIEFSQVIQKIAEGTAGEGGEVSPKEMWDAFAEEYLAPVRPLERIRQHVDAADDDGGTTSITATVKINGVETEISGSGNGPLAAFVHALADVGFDVAVLDYYEHAMSAGDDAQAAAYVEASVTIASPAQPGEAGRHASDPVTIASPAQPGEAGRHASDPVTSKTVWGVGIAPSITTASLRAVVSAVNRAAR.

The disordered stretch occupies residues 1-40 (MTTSESPDAYTESFGAHTIVKPAGPPRVGQPSWNPQRASS). Over residues 31 to 40 (PSWNPQRASS) the composition is skewed to polar residues. Residues 72-346 (PLWCAVDLRD…DPQIDFSNID (275 aa)) enclose the Pyruvate carboxyltransferase domain. Residues Asp-81, His-285, His-287, and Asn-321 each coordinate Mg(2+). The interval 491-644 (PVRPLERIRQ…VVSAVNRAAR (154 aa)) is regulatory domain. One copy of the VNTR1 repeat lies at 575–593 (VTIASPAQPGEAGRHASDP). A disordered region spans residues 581–612 (AQPGEAGRHASDPVTIASPAQPGEAGRHASDP). A VNTR2 repeat occupies 594-612 (VTIASPAQPGEAGRHASDP).

Belongs to the alpha-IPM synthase/homocitrate synthase family. LeuA type 2 subfamily. Homodimer. It depends on Mg(2+) as a cofactor.

The protein resides in the cytoplasm. It carries out the reaction 3-methyl-2-oxobutanoate + acetyl-CoA + H2O = (2S)-2-isopropylmalate + CoA + H(+). It participates in amino-acid biosynthesis; L-leucine biosynthesis; L-leucine from 3-methyl-2-oxobutanoate: step 1/4. Catalyzes the condensation of the acetyl group of acetyl-CoA with 3-methyl-2-oxobutanoate (2-ketoisovalerate) to form 3-carboxy-3-hydroxy-4-methylpentanoate (2-isopropylmalate). The sequence is that of 2-isopropylmalate synthase from Mycobacterium tuberculosis (strain CDC 1551 / Oshkosh).